The chain runs to 57 residues: Potassium channel toxin alpha-KTx 17.2 (57 aa).

The N-terminal stretch at 1–26 is a signal peptide; sequence MKTIIVLLLLTIVAAAVVESSPKARR. 3 disulfides stabilise this stretch: cysteine 30/cysteine 46, cysteine 36/cysteine 51, and cysteine 40/cysteine 53.

The protein belongs to the short scorpion toxin superfamily. Potassium channel inhibitor family. Alpha-KTx 17 subfamily. In terms of tissue distribution, expressed by the venom gland.

Its subcellular location is the secreted. Functionally, inhibits voltage-gated potassium channels. The polypeptide is Potassium channel toxin alpha-KTx 17.2 (Lychas mucronatus (Chinese swimming scorpion)).